The chain runs to 129 residues: Small ribosomal subunit protein bS18c (129 aa).

Residues 1 to 20 (MGTSNTQKPQKQVPKRKKYK) are disordered.

The protein belongs to the bacterial ribosomal protein bS18 family. In terms of assembly, part of the 30S ribosomal subunit.

It localises to the plastid. The protein resides in the chloroplast. This is Small ribosomal subunit protein bS18c from Stigeoclonium helveticum (Green alga).